Here is a 181-residue protein sequence, read N- to C-terminus: 6,7-dimethyl-8-ribityllumazine synthase (181 aa).

Residues Tyr27, Ala58 to Glu60, and Cys87 to Ile89 contribute to the 5-amino-6-(D-ribitylamino)uracil site. Residue Glu92–Thr93 participates in (2S)-2-hydroxy-3-oxobutyl phosphate binding. Residue His95 is the Proton donor of the active site. Asn120 contributes to the 5-amino-6-(D-ribitylamino)uracil binding site. A (2S)-2-hydroxy-3-oxobutyl phosphate-binding site is contributed by Arg134.

The protein belongs to the DMRL synthase family.

It catalyses the reaction (2S)-2-hydroxy-3-oxobutyl phosphate + 5-amino-6-(D-ribitylamino)uracil = 6,7-dimethyl-8-(1-D-ribityl)lumazine + phosphate + 2 H2O + H(+). It participates in cofactor biosynthesis; riboflavin biosynthesis; riboflavin from 2-hydroxy-3-oxobutyl phosphate and 5-amino-6-(D-ribitylamino)uracil: step 1/2. Its function is as follows. Catalyzes the formation of 6,7-dimethyl-8-ribityllumazine by condensation of 5-amino-6-(D-ribitylamino)uracil with 3,4-dihydroxy-2-butanone 4-phosphate. This is the penultimate step in the biosynthesis of riboflavin. The protein is 6,7-dimethyl-8-ribityllumazine synthase of Methylobacterium sp. (strain 4-46).